A 175-amino-acid chain; its full sequence is Alpha-crystallin B chain (175 aa).

At M1 the chain carries N-acetylmethionine. At S19 the chain carries Phosphoserine. S41 carries an O-linked (GlcNAc) serine glycan. Phosphoserine occurs at positions 45 and 59. The sHSP domain occupies 56-164; sequence RAPSWIDTGL…PERTIPITRE (109 aa). Residue H83 participates in Zn(2+) binding. A glycan (N-linked (Glc) (glycation) lysine) is linked at K90. Position 92 is an N6-acetyllysine; alternate (K92). N-linked (Glc) (glycation) lysine; alternate glycosylation is present at K92. Zn(2+)-binding residues include H104, E106, H111, and H119. Positions 144–175 are disordered; that stretch reads TVNGPRKQASGPERTIPITREEKPAVTAAPKK. K166 is modified (N6-acetyllysine). T170 is a glycosylation site (O-linked (GlcNAc) threonine).

Belongs to the small heat shock protein (HSP20) family. Heteromer composed of three CRYAA and one CRYAB subunits. Aggregates with homologous proteins, including the small heat shock protein HSPB1, to form large heteromeric complexes. Inter-subunit bridging via zinc ions enhances stability, which is crucial as there is no protein turn over in the lens. Interacts with HSPBAP1 and TTN/titin. Interacts with TMEM109; in the cellular response to DNA damage. Interacts with DES; binds rapidly during early stages of DES filament assembly and a reduced binding seen in the later stages. Interacts with TMED10; the interaction mediates the translocation from the cytoplasm into the ERGIC (endoplasmic reticulum-Golgi intermediate compartment) and thereby secretion. Interacts with ATP6V1A and with MTOR, forming a ternary complex. In terms of processing, it is not known whether either Lys-90, or Lys-92, or both are glycated. In terms of tissue distribution, lens as well as other tissues.

It localises to the cytoplasm. Its subcellular location is the nucleus. The protein resides in the secreted. The protein localises to the lysosome. In terms of biological role, may contribute to the transparency and refractive index of the lens. Has chaperone-like activity, preventing aggregation of various proteins under a wide range of stress conditions. In lens epithelial cells, stabilizes the ATP6V1A protein, preventing its degradation by the proteasome. This Bos taurus (Bovine) protein is Alpha-crystallin B chain (CRYAB).